The primary structure comprises 158 residues: NAD(P)H-quinone oxidoreductase subunit N (158 aa).

The protein belongs to the complex I NdhN subunit family. As to quaternary structure, NDH-1 can be composed of about 15 different subunits; different subcomplexes with different compositions have been identified which probably have different functions.

Its subcellular location is the cellular thylakoid membrane. It catalyses the reaction a plastoquinone + NADH + (n+1) H(+)(in) = a plastoquinol + NAD(+) + n H(+)(out). It carries out the reaction a plastoquinone + NADPH + (n+1) H(+)(in) = a plastoquinol + NADP(+) + n H(+)(out). Functionally, NDH-1 shuttles electrons from an unknown electron donor, via FMN and iron-sulfur (Fe-S) centers, to quinones in the respiratory and/or the photosynthetic chain. The immediate electron acceptor for the enzyme in this species is believed to be plastoquinone. Couples the redox reaction to proton translocation, and thus conserves the redox energy in a proton gradient. Cyanobacterial NDH-1 also plays a role in inorganic carbon-concentration. The polypeptide is NAD(P)H-quinone oxidoreductase subunit N (Synechococcus elongatus (strain ATCC 33912 / PCC 7942 / FACHB-805) (Anacystis nidulans R2)).